The primary structure comprises 336 residues: MKAIGFKSSFQLDEGNCFEEFNFDIPHPSGHELLVKVQSISVNPVDTKQRTMPVDKVPRVLGFDAVGVIEKIGDQVSMFQEGDVVFYSGSPNQNGSNEEYQLIEEYLVAKAPTNLKSEQAASLPLTGLTAYETLFDVFGISKEPSENKGKSLLIINGAGGVGSIATQIAKFYGLKVITTASREDTIKWSVNMGADVVLNHKKDLSQQFKDNHIEGVDYIFCTFDTDMYYEMMVNLVKPRGHIATIVAFNSQQDLNLLKSKSVTFTHEFMFSRPLHHTDDVIKHHEYLKDITEKVEQGYYQPTTTKVIDGLDVDSLYEAHQILESHSMIGKLVINLK.

This sequence belongs to the zinc-containing alcohol dehydrogenase family. Quinone oxidoreductase subfamily.

This chain is Zinc-type alcohol dehydrogenase-like protein SE_1777, found in Staphylococcus epidermidis (strain ATCC 12228 / FDA PCI 1200).